The chain runs to 224 residues: Menaquinol:cytochrome c reductase cytochrome b subunit (224 aa).

The helical transmembrane segment at 37 to 57 (FSAFVYCFGGLTFFVTVIQIL) threads the bilayer. Residue tyrosine 42 participates in heme b binding. Cysteine 43 is a heme c binding site. Heme b is bound by residues arginine 91, histidine 94, histidine 108, and arginine 111. 3 helical membrane-spanning segments follow: residues 96–116 (WGAS…FFQG), 126–146 (WIVG…GYLL), and 195–215 (IHVF…FLMI). Heme b contacts are provided by histidine 196 and histidine 211. Positions 216 and 220 each coordinate heme c. Serine 221 is a heme b binding site.

It belongs to the cytochrome b family. The main subunits of the menaquinol:cytochrome c complex are a Rieske-type iron-sulfur protein (QcrA), a cytochrome b (QcrB) and a cytochrome c (QcrC). Heme b serves as cofactor. Requires heme c as cofactor.

It localises to the cell membrane. In terms of biological role, component of the menaquinol:cytochrome c reductase complex. The polypeptide is Menaquinol:cytochrome c reductase cytochrome b subunit (qcrB) (Geobacillus thermodenitrificans).